The following is a 588-amino-acid chain: Aspartate--tRNA ligase (588 aa).

Glu177 lines the L-aspartate pocket. The interval 201–204 (QLFK) is aspartate. L-aspartate is bound at residue Arg223. Residues 223–225 (RDE) and Gln232 each bind ATP. His451 contacts L-aspartate. Glu485 is a binding site for ATP. Arg492 is an L-aspartate binding site. Position 537-540 (537-540 (GLDR)) interacts with ATP.

It belongs to the class-II aminoacyl-tRNA synthetase family. Type 1 subfamily. In terms of assembly, homodimer.

Its subcellular location is the cytoplasm. The catalysed reaction is tRNA(Asp) + L-aspartate + ATP = L-aspartyl-tRNA(Asp) + AMP + diphosphate. Functionally, catalyzes the attachment of L-aspartate to tRNA(Asp) in a two-step reaction: L-aspartate is first activated by ATP to form Asp-AMP and then transferred to the acceptor end of tRNA(Asp). This chain is Aspartate--tRNA ligase, found in Staphylococcus haemolyticus (strain JCSC1435).